The primary structure comprises 147 residues: Fibromodulin (147 aa).

LRR repeat units lie at residues 1–15 (LDHNNLTRMPGPLPR), 16–37 (SLRELHLDHNQISRVPNNALEG), 40–61 (NLTALYLQHNEIQEVGSSMRGL), 63–84 (SLILLDLSYNHLRRVPDGLPSA), 85–105 (LEQLYLEHNNVYTVPDSYFRG), and 108–128 (KLLYVRLSHNSLTNSGLASNT). Asparagine 5 carries N-linked (GlcNAc...) asparagine glycosylation. Asparagine 40 is a glycosylation site (N-linked (GlcNAc...) asparagine). An N-linked (GlcNAc...) asparagine glycan is attached at asparagine 130. One copy of the LRR 7 repeat lies at 133–147 (SLLELDLSYNQLQKI).

This sequence belongs to the small leucine-rich proteoglycan (SLRP) family. SLRP class II subfamily. In terms of assembly, binds to type I and type II collagen. In terms of processing, binds keratan sulfate chains. Sulfated on tyrosine residues. Post-translationally, the N-terminus is blocked by a pyrrolidone carboxylic acid generated by post-translational modification of N-terminal glutamine.

The protein resides in the secreted. The protein localises to the extracellular space. It is found in the extracellular matrix. Functionally, affects the rate of fibrils formation. May have a primary role in collagen fibrillogenesis. This chain is Fibromodulin (FMOD), found in Oryctolagus cuniculus (Rabbit).